Consider the following 436-residue polypeptide: Ribosomal protein uS12 methylthiotransferase RimO (436 aa).

One can recognise an MTTase N-terminal domain in the interval 4–122 (KRIDIITLGC…LLQDLGKTYH (119 aa)). Positions 13, 51, 85, 146, 150, and 153 each coordinate [4Fe-4S] cluster. Residues 132–363 (TTPKHYAYLK…MDIQQGISAE (232 aa)) form the Radical SAM core domain. One can recognise a TRAM domain in the interval 366 to 433 (AAKIGQQMKV…DFDLYAKILN (68 aa)).

Belongs to the methylthiotransferase family. RimO subfamily. [4Fe-4S] cluster serves as cofactor.

The protein localises to the cytoplasm. It carries out the reaction L-aspartate(89)-[ribosomal protein uS12]-hydrogen + (sulfur carrier)-SH + AH2 + 2 S-adenosyl-L-methionine = 3-methylsulfanyl-L-aspartate(89)-[ribosomal protein uS12]-hydrogen + (sulfur carrier)-H + 5'-deoxyadenosine + L-methionine + A + S-adenosyl-L-homocysteine + 2 H(+). Catalyzes the methylthiolation of an aspartic acid residue of ribosomal protein uS12. This is Ribosomal protein uS12 methylthiotransferase RimO from Bacteroides thetaiotaomicron (strain ATCC 29148 / DSM 2079 / JCM 5827 / CCUG 10774 / NCTC 10582 / VPI-5482 / E50).